The sequence spans 843 residues: Pullulanase (843 aa).

A signal peptide spans 1-19 (MKTKLWLLLVLLLSALIFS). Asp-535 functions as the Nucleophile in the catalytic mechanism. Residue Glu-564 is the Proton donor of the active site.

Belongs to the glycosyl hydrolase 13 family.

It catalyses the reaction Hydrolysis of (1-&gt;6)-alpha-D-glucosidic linkages in pullulan, amylopectin and glycogen, and in the alpha- and beta-limit dextrins of amylopectin and glycogen.. In Thermotoga maritima (strain ATCC 43589 / DSM 3109 / JCM 10099 / NBRC 100826 / MSB8), this protein is Pullulanase (pulA).